We begin with the raw amino-acid sequence, 479 residues long: MVKETELIFIPVPSTGHILVHIEFAKRLINLDHRIHTITILNLSSPSSPHASVFARSLIASQPKIRLHDLPPIQDPPPFDLYQRAPEAYIVKLIKKNTPLIKDAVSSIVASRRGGSDSVQVAGLVLDLFCNSLVKDVGNELNLPSYIYLTCNARYLGMMKYIPDRHRKIASEFDLSSGDEELPVPGFINAIPTKFMPPGLFNKEAYEAYVELAPRFADAKGILVNSFTELEPHPFDYFSHLEKFPPVYPVGPILSLKDRASPNEEAVDRDQIVGWLDDQPESSVVFLCFGSRGSVDEPQVKEIARALELVGCRFLWSIRTSGDVETNPNDVLPEGFMGRVAGRGLVCGWAPQVEVLAHKAIGGFVSHCGWNSTLESLWFGVPVATWPMYAEQQLNAFTLVKELGLAVDLRMDYVSSRGGLVTCDEIARAVRSLMDGGDEKRKKVKEMADAARKALMDGGSSSLATARFIAELFEDGSSC.

His17 (proton acceptor) is an active-site residue. Residue His17 coordinates an anthocyanidin. Residue Asp127 is the Charge relay of the active site. Positions 150, 350, 352, 367, 370, 371, 372, and 375 each coordinate UDP-alpha-D-glucose. Ala390 contacts an anthocyanidin. Residues Glu391 and Gln392 each contribute to the UDP-alpha-D-glucose site.

Belongs to the UDP-glycosyltransferase family.

The enzyme catalyses a flavonol + UDP-alpha-D-glucose = a flavonol 3-O-beta-D-glucoside + UDP + H(+). It catalyses the reaction a 7-O-hydroxy-flavonol + UDP-alpha-D-glucose = a flavonol 7-O-beta-D-glucoside + UDP + H(+). Functionally, possesses quercetin 3-O-glucosyltransferase and 7-O-glucosyltransferase activities in vitro. Also active in vitro on benzoates and benzoate derivatives. In Arabidopsis thaliana (Mouse-ear cress), this protein is Flavonol 3-O-glucosyltransferase UGT71C4.